A 148-amino-acid chain; its full sequence is Putative nickel-responsive regulator (148 aa).

Ni(2+) is bound by residues His-88, His-99, His-101, and Cys-107.

The protein belongs to the transcriptional regulatory CopG/NikR family. Ni(2+) serves as cofactor.

Transcriptional regulator. The protein is Putative nickel-responsive regulator of Helicobacter pylori (strain Shi470).